We begin with the raw amino-acid sequence, 269 residues long: Undecaprenyl-diphosphatase (269 aa).

8 consecutive transmembrane segments (helical) span residues 3–23 (LLIK…LPIS), 41–61 (FATM…VFYY), 78–98 (GFNL…IGLL), 107–127 (LFSP…MIVI), 148–167 (SLLI…SRSA), 184–204 (AEFS…LSLL), 213–233 (LEWQ…LFVV), and 248–268 (FAYY…EKIV).

It belongs to the UppP family.

It localises to the cell membrane. The enzyme catalyses di-trans,octa-cis-undecaprenyl diphosphate + H2O = di-trans,octa-cis-undecaprenyl phosphate + phosphate + H(+). Its function is as follows. Catalyzes the dephosphorylation of undecaprenyl diphosphate (UPP). Confers resistance to bacitracin. In Thermoanaerobacter sp. (strain X514), this protein is Undecaprenyl-diphosphatase.